Consider the following 419-residue polypeptide: MPLSRWLRSVGVFLLPAPYWAPRERWLGSLRRPSLVHGYPVLAWHSARCWCQAWTEEPRALCSSLRMNGDQNSDVYAQEKQDFVQHFSQIVRVLTEDEMGHPEIGDAIARLKEVLEYNAIGGKYNRGLTVVVAFRELVEPRKQDADSLQRAWTVGWCVELLQAFFLVADDIMDSSLTRRGQICWYQKPGVGLDAINDANLLEACIYRLLKLYCREQPYYLNLIELFLQSSYQTEIGQTLDLLTAPQGNVDLVRFTEKRYKSIVKYKTAFYSFYLPIAAAMYMAGIDGEKEHANAKKILLEMGEFFQIQDDYLDLFGDPSVTGKIGTDIQDNKCSWLVVQCLQRATPEQYQILKENYGQKEAEKVARVKALYEELDLPAVFLQYEEDSYSHIMALIEQYAAPLPPAVFLGLARKIYKRRK.

Met-1 carries the N-acetylmethionine modification. 3 residues coordinate isopentenyl diphosphate: Lys-123, Arg-126, and Gln-162. Lys-123 carries the post-translational modification N6-(2-hydroxyisobutyryl)lysine; alternate. Lys-123 is subject to N6-acetyllysine; alternate. Positions 169 and 173 each coordinate Mg(2+). Arg-178 contributes to the dimethylallyl diphosphate binding site. Arg-179 lines the isopentenyl diphosphate pocket. Residues Lys-266, Thr-267, Gln-306, Lys-323, and Lys-332 each coordinate dimethylallyl diphosphate. Position 353 is an N6-acetyllysine (Lys-353).

This sequence belongs to the FPP/GGPP synthase family. Homodimer. Interacts with RSAD2. In terms of assembly, (Microbial infection) Interacts with HTLV-1 protein p13(II). The cofactor is Mg(2+).

It is found in the cytoplasm. The catalysed reaction is isopentenyl diphosphate + dimethylallyl diphosphate = (2E)-geranyl diphosphate + diphosphate. The enzyme catalyses isopentenyl diphosphate + (2E)-geranyl diphosphate = (2E,6E)-farnesyl diphosphate + diphosphate. It participates in isoprenoid biosynthesis; farnesyl diphosphate biosynthesis; farnesyl diphosphate from geranyl diphosphate and isopentenyl diphosphate: step 1/1. Its pathway is isoprenoid biosynthesis; geranyl diphosphate biosynthesis; geranyl diphosphate from dimethylallyl diphosphate and isopentenyl diphosphate: step 1/1. Inactivated by interferon-induced RSAD2. This inactivation may result of disruption of lipid rafts at the plasma membrane, and thus have an antiviral effect since many enveloped viruses need lipid rafts to bud efficiently out of the cell. Key enzyme in isoprenoid biosynthesis which catalyzes the formation of farnesyl diphosphate (FPP), a precursor for several classes of essential metabolites including sterols, dolichols, carotenoids, and ubiquinones. FPP also serves as substrate for protein farnesylation and geranylgeranylation. Catalyzes the sequential condensation of isopentenyl pyrophosphate with the allylic pyrophosphates, dimethylallyl pyrophosphate, and then with the resultant geranylpyrophosphate to the ultimate product farnesyl pyrophosphate. In Homo sapiens (Human), this protein is Farnesyl pyrophosphate synthase.